Consider the following 146-residue polypeptide: Large ribosomal subunit protein uL15 (146 aa).

Residues 1–53 form a disordered region; sequence MILSNLKPVPGARHSKKRLGRGPGSGTGKTSGKGHKGQKARSGGGVRPGFEGG. 2 stretches are compositionally biased toward gly residues: residues 21–31 and 42–52; these read RGPGSGTGKTS and SGGGVRPGFEG.

It belongs to the universal ribosomal protein uL15 family. As to quaternary structure, part of the 50S ribosomal subunit.

Its function is as follows. Binds to the 23S rRNA. The chain is Large ribosomal subunit protein uL15 from Acholeplasma laidlawii (strain PG-8A).